We begin with the raw amino-acid sequence, 185 residues long: Elongation factor P (185 aa).

The protein belongs to the elongation factor P family.

The protein localises to the cytoplasm. It participates in protein biosynthesis; polypeptide chain elongation. Functionally, involved in peptide bond synthesis. Stimulates efficient translation and peptide-bond synthesis on native or reconstituted 70S ribosomes in vitro. Probably functions indirectly by altering the affinity of the ribosome for aminoacyl-tRNA, thus increasing their reactivity as acceptors for peptidyl transferase. The polypeptide is Elongation factor P (Petrotoga mobilis (strain DSM 10674 / SJ95)).